Consider the following 352-residue polypeptide: RAD51-associated protein 1 (352 aa).

Basic residues predominate over residues 1–10; sequence MVRPVRHKKP. Disordered regions lie at residues 1–78 and 115–144; these read MVRP…TFSI and TNVQNSQDKSIEKHGSSKIETMNKSPHISN. 2 positions are modified to phosphoserine: S19 and S21. Residues 30–49 form an interaction with DNA region; sequence VPLNKKSRTAPKELKQDKPK. The segment covering 39 to 72 has biased composition (basic and acidic residues); that stretch reads APKELKQDKPKPNLNNLRKEEIPVQEKTPKKRLP. Position 66 is a phosphothreonine (T66). A phosphoserine mark is found at S120 and S124. The segment covering 132 to 144 has biased composition (polar residues); that stretch reads KIETMNKSPHISN. The SIM motif motif lies at 154–159; that stretch reads LDKITV. The tract at residues 162–323 is disordered; it reads DVGGVQGKRK…RSSSSPLVVV (162 aa). Residues 188-221 show a composition bias toward acidic residues; sequence SDGDSANDTEPDFAPGEDSEDDSDFCESEDNDED. Residues 229 to 247 are compositionally biased toward basic and acidic residues; the sequence is VKEIKKKEVKVKSPVEKKE. Residues 243-304 form an interaction with DNA region; it reads VEKKEKKSKS…PSAESKKPKW (62 aa). K251 is covalently cross-linked (Glycyl lysine isopeptide (Lys-Gly) (interchain with G-Cter in ubiquitin; alternate)). Residue K269 forms a Glycyl lysine isopeptide (Lys-Gly) (interchain with G-Cter in SUMO) linkage. Over residues 270-284 the composition is skewed to polar residues; sequence SESQSLPKKVSLSSD. At S280 the chain carries Phosphoserine. Residues 304 to 307 carry the WVPP motif motif; sequence WVPP. The span at 306 to 323 shows a compositional bias: low complexity; the sequence is PPAASGGSRSSSSPLVVV. An interaction with RAD51 region spans residues 313–352; that stretch reads SRSSSSPLVVVSVKSPNQSLRLGLSRLARVKPLHPNATST. At S327 the chain carries Phosphoserine.

In terms of assembly, monomer; elongated monodisperse monomer. Interacts (via C-terminal region) with RAD51; the interaction is direct. Interacts (via SIM motif) with WDR48/UAF1; WDR48/UAF1 and RAD51AP1 cooperate together to stimulate RAD51-mediated homologous recombination (HR). Interacts (via WVPP motif) with DMC1; the interaction is direct. Interacts with PALB2. Interacts with RAD52. As to quaternary structure, does not interact with DMC1; lack of interaction is caused by the absence of the WVPP motif in this isoform. In terms of processing, sumoylation with SUMO2/3 by NSMCE2/MMS21 promotes stabilization, possibly by preventing ubiquitination. Sumoylation is required for alternative lengthening of telomeres (ALT) pathway. As to expression, highly expressed in testis and thymus. Lower levels in colon and small intestine. Little or no expression in spleen, prostate, ovary and peripheral blood leukocytes.

The protein localises to the chromosome. It is found in the nucleus. The protein resides in the telomere. Structure-specific DNA-binding protein involved in DNA repair by promoting RAD51-mediated homologous recombination. Acts by stimulating D-Loop formation by RAD51: specifically enhances joint molecule formation through its structure-specific DNA interaction and its interaction with RAD51. Binds single-stranded DNA (ssDNA), double-stranded DNA (dsDNA) and secondary DNA structures, such as D-loop structures: has a strong preference for branched-DNA structures that are obligatory intermediates during joint molecule formation. Cooperates with WDR48/UAF1 to stimulate RAD51-mediated homologous recombination: both WDR48/UAF1 and RAD51AP1 have coordinated role in DNA-binding during homologous recombination and DNA repair. WDR48/UAF1 and RAD51AP1 also have a coordinated role in DNA-binding to promote USP1-mediated deubiquitination of FANCD2. Also involved in meiosis by promoting DMC1-mediated homologous meiotic recombination. Key mediator of alternative lengthening of telomeres (ALT) pathway, a homology-directed repair mechanism of telomere elongation that controls proliferation in aggressive cancers, by stimulating homologous recombination. May also bind RNA; additional evidences are however required to confirm RNA-binding in vivo. The polypeptide is RAD51-associated protein 1 (Homo sapiens (Human)).